A 160-amino-acid chain; its full sequence is tRNA (cytidine(34)-2'-O)-methyltransferase (160 aa).

The S-adenosyl-L-methionine site is built by leucine 78, glycine 100, isoleucine 122, and serine 130.

This sequence belongs to the class IV-like SAM-binding methyltransferase superfamily. RNA methyltransferase TrmH family. TrmL subfamily. Homodimer.

Its subcellular location is the cytoplasm. It catalyses the reaction cytidine(34) in tRNA + S-adenosyl-L-methionine = 2'-O-methylcytidine(34) in tRNA + S-adenosyl-L-homocysteine + H(+). The catalysed reaction is 5-carboxymethylaminomethyluridine(34) in tRNA(Leu) + S-adenosyl-L-methionine = 5-carboxymethylaminomethyl-2'-O-methyluridine(34) in tRNA(Leu) + S-adenosyl-L-homocysteine + H(+). Functionally, methylates the ribose at the nucleotide 34 wobble position in the two leucyl isoacceptors tRNA(Leu)(CmAA) and tRNA(Leu)(cmnm5UmAA). Catalyzes the methyl transfer from S-adenosyl-L-methionine to the 2'-OH of the wobble nucleotide. The chain is tRNA (cytidine(34)-2'-O)-methyltransferase from Haemophilus influenzae (strain ATCC 51907 / DSM 11121 / KW20 / Rd).